The following is a 141-amino-acid chain: Lutropin subunit beta (141 aa).

The N-terminal stretch at 1-20 is a signal peptide; it reads MEMLQGLLLWLLLNVGGVWA. Cystine bridges form between C29-C77, C43-C92, C46-C130, C54-C108, C58-C110, and C113-C120. A glycan (N-linked (GlcNAc...) asparagine) is linked at N33.

The protein belongs to the glycoprotein hormones subunit beta family. In terms of assembly, heterodimer of a common alpha chain and a unique beta chain which confers biological specificity to thyrotropin, lutropin, follitropin and gonadotropin.

The protein resides in the secreted. Its function is as follows. Promotes spermatogenesis and ovulation by stimulating the testes and ovaries to synthesize steroids. This Ailurus fulgens (Himalayan red panda) protein is Lutropin subunit beta (LHB).